The primary structure comprises 249 residues: Metallo-beta-lactamase type 2 (249 aa).

Residues 1–22 (MLKKIKISLILALGLTSLQAFG) form the signal peptide. Zn(2+)-binding residues include His98, His100, Asp102, His161, and Cys180. Lys183 serves as a coordination point for substrate. Position 222 (His222) interacts with Zn(2+).

Belongs to the metallo-beta-lactamase superfamily. Class-B beta-lactamase family. Monomer. The cofactor is Zn(2+).

It is found in the periplasm. The enzyme catalyses a beta-lactam + H2O = a substituted beta-amino acid. Functionally, confers resistance to the different beta-lactams antibiotics (penicillin, cephalosporin and carbapenem) via the hydrolysis of the beta-lactam ring. This chain is Metallo-beta-lactamase type 2 (blaB2), found in Elizabethkingia meningoseptica (Chryseobacterium meningosepticum).